Here is a 73-residue protein sequence, read N- to C-terminus: uncharacterized protein (73 aa).

The helical transmembrane segment at 54 to 72 threads the bilayer; that stretch reads VSFIVAPTVMQVQCLFFFI.

Its subcellular location is the membrane. This is an uncharacterized protein from Saccharomyces cerevisiae (strain ATCC 204508 / S288c) (Baker's yeast).